We begin with the raw amino-acid sequence, 1707 residues long: Latrophilin Cirl (1707 aa).

The Extracellular segment spans residues 1–767 (MLPTILSISY…LFTMFDGNMR (767 aa)). The SUEL-type lectin domain occupies 25–114 (ACEGKKLTIE…KYLEAHYQCI (90 aa)). N-linked (GlcNAc...) asparagine glycosylation is present at N142. Positions 176–301 (GLFNVPPQHT…TAASGAVVPG (126 aa)) are disordered. Polar residues-rich tracts occupy residues 185–198 (TAVT…STTA) and 256–265 (NATSPSNTRI). N256 is a glycosylation site (N-linked (GlcNAc...) asparagine). The segment covering 275–285 (DDGTLLTTKSS) has biased composition (low complexity). N-linked (GlcNAc...) asparagine glycans are attached at residues N302, N341, N398, N655, N703, and N730. Residues 376 to 400 (YDEYDDDPSSTTPAPNGGDCLHNSS) are disordered. The 194-residue stretch at 561-754 (RSVVQKVKNI…AILMDVVDEH (194 aa)) folds into the GAIN-B domain. 2 cysteine pairs are disulfide-bonded: C709–C736 and C724–C738. The interval 709–754 (CVFWNYIDHAWSANGCSLESTNRTHSVCSCNHLTNFAILMDVVDEH) is GPS. Residues 768–788 (IFIYISIGICVVFIVIALLTL) form a helical membrane-spanning segment. Topologically, residues 789–801 (KLFNGVFVKSART) are cytoplasmic. A helical transmembrane segment spans residues 802–822 (SIYTSIYLCLLAIELLFLLGI). Over 823-828 (EQTETS) the chain is Extracellular. A helical transmembrane segment spans residues 829-849 (IFCGFITIFLHCAILSGTAWF). The Cytoplasmic portion of the chain corresponds to 850–875 (CYEAFHSYSTLTSDELLLEVDQTPKV). A helical membrane pass occupies residues 876–896 (NCYYLLSYGLSLSVVAISLVI). Residues 897–920 (DPSTYTQNDYCVLMEANALFYATF) lie on the Extracellular side of the membrane. The helical transmembrane segment at 921 to 941 (VIPVLVFFVAAIGYTFLSWII) threads the bilayer. Topologically, residues 942–968 (LCRKSRTGLKTKEHTRLASVRFDIRCS) are cytoplasmic. A helical membrane pass occupies residues 969 to 989 (FVFLLLLSAVWCSSYFYLRGA). Topologically, residues 990–999 (KMDDDTADVY) are extracellular. Residues 1000–1020 (GYCFICFNTLLGLYIFVFHCI) form a helical membrane-spanning segment. Residues 1021-1707 (QNEKIRREYR…VRCYLEPLAK (687 aa)) lie on the Cytoplasmic side of the membrane. Position 1156 is a phosphoserine (S1156). Disordered regions lie at residues 1169–1188 (AHKQ…GEGY) and 1236–1260 (KPNS…SGSL). Residues 1172-1181 (QQQQQQQQQQ) are compositionally biased toward low complexity. S1255 and S1262 each carry phosphoserine. Residues 1316 to 1326 (QQLHQQQQQQL) are compositionally biased toward low complexity. Disordered regions lie at residues 1316-1335 (QQLH…QVEQ), 1450-1538 (GGGS…SDER), 1563-1582 (APLD…EHNG), and 1612-1687 (GGRL…QQRH). 2 positions are modified to phosphoserine: S1327 and S1328. Low complexity predominate over residues 1456 to 1481 (GGSVSSRSQQQQLKKQQQQQSLAQQR). Composition is skewed to acidic residues over residues 1489-1503 (DDDD…EEAT) and 1513-1526 (CDED…DLED). Positions 1635–1650 (QTPAQKRQQLQKLSPQ) are enriched in polar residues. Over residues 1651–1673 (STTSSSSHTSHSNPNPHPLQLTH) the composition is skewed to low complexity. Over residues 1674–1686 (PHPHQHPPHHQQR) the composition is skewed to basic residues.

The protein belongs to the G-protein coupled receptor 2 family. LN-TM7 subfamily. Forms a heterodimer, consisting of a large extracellular region non-covalently linked to a seven-transmembrane moiety. Post-translationally, proteolytically cleaved into 2 subunits, an extracellular subunit and a seven-transmembrane subunit.

The protein resides in the cell membrane. This Drosophila yakuba (Fruit fly) protein is Latrophilin Cirl.